We begin with the raw amino-acid sequence, 142 residues long: Translation initiation factor 2 subunit beta (142 aa).

Belongs to the eIF-2-beta/eIF-5 family. As to quaternary structure, heterotrimer composed of an alpha, a beta and a gamma chain.

Functionally, eIF-2 functions in the early steps of protein synthesis by forming a ternary complex with GTP and initiator tRNA. In Thermococcus kodakarensis (strain ATCC BAA-918 / JCM 12380 / KOD1) (Pyrococcus kodakaraensis (strain KOD1)), this protein is Translation initiation factor 2 subunit beta.